A 588-amino-acid chain; its full sequence is Zeta-carotene desaturase, chloroplastic/chromoplastic (588 aa).

It belongs to the zeta carotene desaturase family. It depends on NAD(+) as a cofactor. Requires NADP(+) as cofactor. FAD serves as cofactor.

It localises to the plastid. The protein resides in the chloroplast. It is found in the chromoplast. It carries out the reaction 9,9'-di-cis-zeta-carotene + 2 a quinone = 7,7',9,9'-tetra-cis-lycopene + 2 a quinol. The protein operates within carotenoid biosynthesis; lycopene biosynthesis. In terms of biological role, catalyzes the conversion of zeta-carotene to lycopene via the intermediary of neurosporene. It carries out two consecutive desaturations (introduction of double bonds) at positions C-7 and C-7'. The protein is Zeta-carotene desaturase, chloroplastic/chromoplastic (ZDS) of Solanum lycopersicum (Tomato).